The chain runs to 415 residues: uncharacterized protein (415 aa).

Residue His-88 participates in Zn(2+) binding. Asp-90 is an active-site residue. Asp-121 is a binding site for Zn(2+). Glu-155 functions as the Proton acceptor in the catalytic mechanism. Residues Glu-156, Asp-185, and His-392 each coordinate Zn(2+).

It belongs to the peptidase M20A family. The cofactor is Zn(2+). Requires Co(2+) as cofactor.

This is an uncharacterized protein from Methanococcus maripaludis (strain DSM 14266 / JCM 13030 / NBRC 101832 / S2 / LL).